A 37-amino-acid chain; its full sequence is Large ribosomal subunit protein bL36 (37 aa).

Belongs to the bacterial ribosomal protein bL36 family.

In Mycoplasmopsis pulmonis (strain UAB CTIP) (Mycoplasma pulmonis), this protein is Large ribosomal subunit protein bL36.